Consider the following 158-residue polypeptide: Phosphopantetheine adenylyltransferase (158 aa).

Thr-9 is a binding site for substrate. ATP contacts are provided by residues 9-10 (TF) and His-17. Substrate-binding residues include Lys-41, Leu-73, and Arg-87. Residues 88-90 (GVR), Glu-98, and 123-129 (WSYVSST) contribute to the ATP site.

The protein belongs to the bacterial CoaD family. Homohexamer. Requires Mg(2+) as cofactor.

Its subcellular location is the cytoplasm. The enzyme catalyses (R)-4'-phosphopantetheine + ATP + H(+) = 3'-dephospho-CoA + diphosphate. It participates in cofactor biosynthesis; coenzyme A biosynthesis; CoA from (R)-pantothenate: step 4/5. Reversibly transfers an adenylyl group from ATP to 4'-phosphopantetheine, yielding dephospho-CoA (dPCoA) and pyrophosphate. This is Phosphopantetheine adenylyltransferase from Histophilus somni (strain 2336) (Haemophilus somnus).